The sequence spans 511 residues: Maturase K (511 aa).

Belongs to the intron maturase 2 family. MatK subfamily.

Its subcellular location is the plastid. It is found in the chloroplast. Usually encoded in the trnK tRNA gene intron. Probably assists in splicing its own and other chloroplast group II introns. The protein is Maturase K of Hordeum vulgare subsp. spontaneum (Wild barley).